A 360-amino-acid polypeptide reads, in one-letter code: MKTERVNVNVNNQPYPIYIGENLLQDKSLLQRHVKGRQVMIVSNETIAAFYLDPLKAIYQDFQCDTFILPDGEQYKTLEYWERILHKLASCNHHRDTTLIALGGGVVGDITGFAAACYQRGVDFIQVPTTLLAQVDASIGGKTAVNHPVGKNLIGAFHQPKAVIIDLNTLNTLPEREFKAGMAEIVKAALIKDEKFFTDLENKMSALLQRNFIFLQAVIKRAAEIKRDIVNADEKERSGERTLLNLGHTFAHAIERLLGYGQWLHGEAVSAGLVLAAQLSHRKNLLDFESLQRICRLLTQISLPIHFPKSINADELLSAMYMDKKVANERLHLILLEDLGHAVVSDQVDDRELKSFLENG.

NAD(+) is bound by residues 71–76, 105–109, 129–130, lysine 142, lysine 151, and 169–172; these read DGEQYK, GVVGD, TT, and TLNT. Glutamate 184, histidine 248, and histidine 265 together coordinate Zn(2+).

Belongs to the sugar phosphate cyclases superfamily. Dehydroquinate synthase family. Requires Co(2+) as cofactor. Zn(2+) serves as cofactor. The cofactor is NAD(+).

It localises to the cytoplasm. The enzyme catalyses 7-phospho-2-dehydro-3-deoxy-D-arabino-heptonate = 3-dehydroquinate + phosphate. Its pathway is metabolic intermediate biosynthesis; chorismate biosynthesis; chorismate from D-erythrose 4-phosphate and phosphoenolpyruvate: step 2/7. Its function is as follows. Catalyzes the conversion of 3-deoxy-D-arabino-heptulosonate 7-phosphate (DAHP) to dehydroquinate (DHQ). The chain is 3-dehydroquinate synthase from Coxiella burnetii (strain CbuG_Q212) (Coxiella burnetii (strain Q212)).